Consider the following 509-residue polypeptide: Pancreatic secretory granule membrane major glycoprotein GP2 (509 aa).

An N-terminal signal peptide occupies residues 1 to 21; sequence MVGSYVLWLALASCILTLASP. The interval 36–56 is D10C; sequence DPCQNYTLLDEPSRSTENTEG. Intrachain disulfides connect cysteine 38–cysteine 132, cysteine 60–cysteine 147, cysteine 82–cysteine 120, cysteine 88–cysteine 152, cysteine 113–cysteine 121, cysteine 162–cysteine 172, cysteine 166–cysteine 181, cysteine 183–cysteine 213, cysteine 201–cysteine 292, and cysteine 233–cysteine 256. N-linked (GlcNAc...) asparagine glycans are attached at residues asparagine 40, asparagine 97, and asparagine 109. One can recognise an EGF-like domain in the interval 158–202; that stretch reads ATDKCKNLCRPEEACSFLNGTWDCFCRSDLNSSDVHSLQPRLNCG. N-linked (GlcNAc...) asparagine glycosylation is found at asparagine 176, asparagine 188, and asparagine 232. Positions 200-293 are ZP-N; the sequence is NCGAKEIQVS…TILNINFQCA (94 aa). Residues 200-456 form the ZP domain; it reads NCGAKEIQVS…PCCSRSQQRS (257 aa). N-linked (GlcNAc...) asparagine glycosylation is found at asparagine 263 and asparagine 314. Residues 294-317 are flexible ZP-N/ZP-C linker; the sequence is YPLDMKVSLQTALHPIVSSLNISV. Positions 318 to 329 are internal hydrophobic patch (IHP); the sequence is DGEGEFTVRMAL. The interval 318 to 456 is ZP-C; sequence DGEGEFTVRM…PCCSRSQQRS (139 aa). 3 disulfide bridges follow: cysteine 373–cysteine 433, cysteine 394–cysteine 449, and cysteine 438–cysteine 445. The interval 463-471 is external hydrophobic patch (EHP); it reads PARVLDLGP. A lipid anchor (GPI-anchor amidated aspartate) is attached at aspartate 484. Positions 485–509 are cleaved as a propeptide — removed in mature form; sequence GTPSTAGFLLAWPMLLLPILLAELF.

As to quaternary structure, interacts with SYCN. Interacts with bacterial adhesin fimH. Post-translationally, N-glycosylated. As to expression, expressed in pancreas.

The protein localises to the zymogen granule membrane. It is found in the secreted. The protein resides in the cell membrane. It localises to the apical cell membrane. Its subcellular location is the membrane raft. The protein localises to the endosome. Functionally, functions as an intestinal M-cell transcytotic receptor specific of type-I-piliated bacteria that participates in the mucosal immune response toward these bacteria. At the apical membrane of M-cells it binds fimH, a protein of the bacteria type I pilus tip. Internalizes bound bacteria, like E.coli and S.typhimurium, from the lumen of the intestine and delivers them, through M-cells, to the underlying organized lymphoid follicles where they are captured by antigen-presenting dendritic cells to elicit a mucosal immune response. This Canis lupus familiaris (Dog) protein is Pancreatic secretory granule membrane major glycoprotein GP2.